The chain runs to 426 residues: Serine--tRNA ligase (426 aa).

228 to 230 provides a ligand contact to L-serine; sequence TSE. Residues 259 to 261 and Val-275 each bind ATP; that span reads RRE. Glu-282 is an L-serine binding site. 346–349 serves as a coordination point for ATP; the sequence is ELTS. Residue Thr-386 coordinates L-serine.

This sequence belongs to the class-II aminoacyl-tRNA synthetase family. Type-1 seryl-tRNA synthetase subfamily. In terms of assembly, homodimer. The tRNA molecule binds across the dimer.

It is found in the cytoplasm. The enzyme catalyses tRNA(Ser) + L-serine + ATP = L-seryl-tRNA(Ser) + AMP + diphosphate + H(+). The catalysed reaction is tRNA(Sec) + L-serine + ATP = L-seryl-tRNA(Sec) + AMP + diphosphate + H(+). It functions in the pathway aminoacyl-tRNA biosynthesis; selenocysteinyl-tRNA(Sec) biosynthesis; L-seryl-tRNA(Sec) from L-serine and tRNA(Sec): step 1/1. Catalyzes the attachment of serine to tRNA(Ser). Is also able to aminoacylate tRNA(Sec) with serine, to form the misacylated tRNA L-seryl-tRNA(Sec), which will be further converted into selenocysteinyl-tRNA(Sec). This Arthrobacter sp. (strain FB24) protein is Serine--tRNA ligase.